A 216-amino-acid polypeptide reads, in one-letter code: Probable ubiquitin-conjugating enzyme E2 ECU01_1010 (216 aa).

Residues 1-10 (MFKPSAHRRL) show a composition bias toward basic residues. The segment at 1 to 29 (MFKPSAHRRLPREDDIIQEDDEDGPLWPS) is disordered. In terms of domain architecture, UBC core spans 29-196 (SALRRLSNEE…VIRIAREEDE (168 aa)). The active-site Glycyl thioester intermediate is C120.

It belongs to the ubiquitin-conjugating enzyme family.

It catalyses the reaction S-ubiquitinyl-[E1 ubiquitin-activating enzyme]-L-cysteine + [E2 ubiquitin-conjugating enzyme]-L-cysteine = [E1 ubiquitin-activating enzyme]-L-cysteine + S-ubiquitinyl-[E2 ubiquitin-conjugating enzyme]-L-cysteine.. It functions in the pathway protein modification; protein ubiquitination. Catalyzes the covalent attachment of ubiquitin to other proteins so as to signal them for selective protein degradation. Involved in the formation of multiubiquitin chains. This is Probable ubiquitin-conjugating enzyme E2 ECU01_1010 from Encephalitozoon cuniculi (strain GB-M1) (Microsporidian parasite).